We begin with the raw amino-acid sequence, 447 residues long: UPF0210 protein LCK_00974 (447 aa).

Belongs to the UPF0210 family. As to quaternary structure, homodimer.

This chain is UPF0210 protein LCK_00974, found in Leuconostoc citreum (strain KM20).